The following is a 183-amino-acid chain: ATP synthase subunit delta (183 aa).

The protein belongs to the ATPase delta chain family. F-type ATPases have 2 components, F(1) - the catalytic core - and F(0) - the membrane proton channel. F(1) has five subunits: alpha(3), beta(3), gamma(1), delta(1), epsilon(1). F(0) has three main subunits: a(1), b(2) and c(10-14). The alpha and beta chains form an alternating ring which encloses part of the gamma chain. F(1) is attached to F(0) by a central stalk formed by the gamma and epsilon chains, while a peripheral stalk is formed by the delta and b chains.

The protein localises to the cell inner membrane. Functionally, f(1)F(0) ATP synthase produces ATP from ADP in the presence of a proton or sodium gradient. F-type ATPases consist of two structural domains, F(1) containing the extramembraneous catalytic core and F(0) containing the membrane proton channel, linked together by a central stalk and a peripheral stalk. During catalysis, ATP synthesis in the catalytic domain of F(1) is coupled via a rotary mechanism of the central stalk subunits to proton translocation. Its function is as follows. This protein is part of the stalk that links CF(0) to CF(1). It either transmits conformational changes from CF(0) to CF(1) or is implicated in proton conduction. The polypeptide is ATP synthase subunit delta (Oleidesulfovibrio alaskensis (strain ATCC BAA-1058 / DSM 17464 / G20) (Desulfovibrio alaskensis)).